Consider the following 282-residue polypeptide: Ribosomal protein L11 methyltransferase (282 aa).

4 residues coordinate S-adenosyl-L-methionine: Thr-133, Gly-154, Asp-175, and Asn-216.

The protein belongs to the methyltransferase superfamily. PrmA family.

The protein localises to the cytoplasm. The enzyme catalyses L-lysyl-[protein] + 3 S-adenosyl-L-methionine = N(6),N(6),N(6)-trimethyl-L-lysyl-[protein] + 3 S-adenosyl-L-homocysteine + 3 H(+). In terms of biological role, methylates ribosomal protein L11. The protein is Ribosomal protein L11 methyltransferase of Campylobacter jejuni subsp. doylei (strain ATCC BAA-1458 / RM4099 / 269.97).